The primary structure comprises 336 residues: Ornithine carbamoyltransferase, catabolic (336 aa).

Carbamoyl phosphate is bound by residues 57–60, Q84, R108, and 135–138; these read STRT and HPTQ. L-ornithine is bound by residues N168, D232, and 236 to 237; that span reads SM. Residues 274–275 and R321 each bind carbamoyl phosphate; that span reads CL.

It belongs to the aspartate/ornithine carbamoyltransferase superfamily. OTCase family.

The protein localises to the cytoplasm. It carries out the reaction carbamoyl phosphate + L-ornithine = L-citrulline + phosphate + H(+). Its pathway is amino-acid degradation; L-arginine degradation via ADI pathway; carbamoyl phosphate from L-arginine: step 2/2. Reversibly catalyzes the transfer of the carbamoyl group from carbamoyl phosphate (CP) to the N(epsilon) atom of ornithine (ORN) to produce L-citrulline. The sequence is that of Ornithine carbamoyltransferase, catabolic (arcB) from Ectopseudomonas mendocina (Pseudomonas mendocina).